A 140-amino-acid chain; its full sequence is Large ribosomal subunit protein uL11 (140 aa).

This sequence belongs to the universal ribosomal protein uL11 family. As to quaternary structure, part of the ribosomal stalk of the 50S ribosomal subunit. Interacts with L10 and the large rRNA to form the base of the stalk. L10 forms an elongated spine to which L12 dimers bind in a sequential fashion forming a multimeric L10(L12)X complex. In terms of processing, one or more lysine residues are methylated.

Functionally, forms part of the ribosomal stalk which helps the ribosome interact with GTP-bound translation factors. The polypeptide is Large ribosomal subunit protein uL11 (Staphylococcus aureus (strain Mu3 / ATCC 700698)).